Reading from the N-terminus, the 158-residue chain is Transcription elongation factor GreA (158 aa).

Belongs to the GreA/GreB family.

Necessary for efficient RNA polymerase transcription elongation past template-encoded arresting sites. The arresting sites in DNA have the property of trapping a certain fraction of elongating RNA polymerases that pass through, resulting in locked ternary complexes. Cleavage of the nascent transcript by cleavage factors such as GreA or GreB allows the resumption of elongation from the new 3'terminus. GreA releases sequences of 2 to 3 nucleotides. This chain is Transcription elongation factor GreA, found in Sinorhizobium medicae (strain WSM419) (Ensifer medicae).